A 145-amino-acid polypeptide reads, in one-letter code: Large ribosomal subunit protein uL11 (145 aa).

It belongs to the universal ribosomal protein uL11 family. Part of the ribosomal stalk of the 50S ribosomal subunit. Interacts with L10 and the large rRNA to form the base of the stalk. L10 forms an elongated spine to which L12 dimers bind in a sequential fashion forming a multimeric L10(L12)X complex. In terms of processing, one or more lysine residues are methylated.

Functionally, forms part of the ribosomal stalk which helps the ribosome interact with GTP-bound translation factors. In Rickettsia africae (strain ESF-5), this protein is Large ribosomal subunit protein uL11.